The following is a 217-amino-acid chain: Uracil-DNA glycosylase (217 aa).

Aspartate 62 acts as the Proton acceptor in catalysis.

Belongs to the uracil-DNA glycosylase (UDG) superfamily. UNG family.

The protein resides in the cytoplasm. The catalysed reaction is Hydrolyzes single-stranded DNA or mismatched double-stranded DNA and polynucleotides, releasing free uracil.. Functionally, excises uracil residues from the DNA which can arise as a result of misincorporation of dUMP residues by DNA polymerase or due to deamination of cytosine. The chain is Uracil-DNA glycosylase from Streptococcus pneumoniae (strain Hungary19A-6).